The following is a 550-amino-acid chain: Hydroxylamine reductase (550 aa).

[2Fe-2S] cluster contacts are provided by C3, C6, C18, and C25. Hybrid [4Fe-2O-2S] cluster is bound by residues H249, E273, C317, C405, C433, C458, E492, and K494. C405 is modified (cysteine persulfide).

The protein belongs to the HCP family. The cofactor is [2Fe-2S] cluster. Hybrid [4Fe-2O-2S] cluster is required as a cofactor.

The protein resides in the cytoplasm. The enzyme catalyses A + NH4(+) + H2O = hydroxylamine + AH2 + H(+). Its function is as follows. Catalyzes the reduction of hydroxylamine to form NH(3) and H(2)O. In Salmonella paratyphi A (strain ATCC 9150 / SARB42), this protein is Hydroxylamine reductase.